The sequence spans 179 residues: Large ribosomal subunit protein uL5 (179 aa).

It belongs to the universal ribosomal protein uL5 family. In terms of assembly, part of the 50S ribosomal subunit; part of the 5S rRNA/L5/L18/L25 subcomplex. Contacts the 5S rRNA and the P site tRNA. Forms a bridge to the 30S subunit in the 70S ribosome.

Functionally, this is one of the proteins that bind and probably mediate the attachment of the 5S RNA into the large ribosomal subunit, where it forms part of the central protuberance. In the 70S ribosome it contacts protein S13 of the 30S subunit (bridge B1b), connecting the 2 subunits; this bridge is implicated in subunit movement. Contacts the P site tRNA; the 5S rRNA and some of its associated proteins might help stabilize positioning of ribosome-bound tRNAs. The sequence is that of Large ribosomal subunit protein uL5 from Lawsonia intracellularis (strain PHE/MN1-00).